The chain runs to 471 residues: MKSKMAAKDQKRLDNASSSDTKIEFEFGGAPGVTLIMIGFPLLMYYMYIGAVLYDGLLPTPEDGQSWADFLSHLVSLAYTHAYPTRKAWTIYWTFLILEGAGYLYLPGVYGKGKRLPHLGGKQLPYYCSAVSSWYLTIAAALILHFTGVLKLYTLIDEFGPLMSVAICSGIFVSIVAYISALVRGVEHRMTGSHVYDFFMGAELNPRLFGWLDFKMFFEVRIPWFILFLLTLGTALKQLEEYGLVAGEVLFLLMAHFLYANACAKGEELIITSWDMYYEKWGFMLIFWNLAGVPMSYCHCTLYLAYHDPSTYHWNPWVLAVWAVAYLFMYWVWDTCNSQKNYFRAQERGVTVDRKTFPQLPWKYIENPQSIPTKTGDSILCSGWFGMARKVHYTCDVFFAISWGLITGFNSPFPWFYPCFFTVMIIHRARRDINRCRERYGEAWMEYERRVPYLFIPVSFADLPHKDKLTD.

N15 is a glycosylation site (N-linked (GlcNAc...) asparagine). A run of 8 helical transmembrane segments spans residues 33 to 53, 89 to 109, 130 to 150, 159 to 179, 216 to 236, 244 to 264, 282 to 302, and 313 to 333; these read VTLIMIGFPLLMYYMYIGAVL, WTIYWTFLILEGAGYLYLPGV, AVSSWYLTIAAALILHFTGVL, FGPLMSVAICSGIFVSIVAYI, MFFEVRIPWFILFLLTLGTAL, LVAGEVLFLLMAHFLYANACA, GFMLIFWNLAGVPMSYCHCTL, and HWNPWVLAVWAVAYLFMYWVW. NADP(+) contacts are provided by residues K340, R344, L380, and 392 to 393; that span reads HY. The helical transmembrane segment at 397–417 threads the bilayer; that stretch reads VFFAISWGLITGFNSPFPWFY. Residues D432, 436–440, and Y447 contribute to the NADP(+) site; that span reads CRERY.

Belongs to the ERG4/ERG24 family.

It localises to the endoplasmic reticulum membrane. The catalysed reaction is ergosterol + NADP(+) = ergosta-5,7,22,24(28)-tetraen-3beta-ol + NADPH + H(+). The protein operates within steroid metabolism; ergosterol biosynthesis. In terms of biological role, delta(24(24(1)))-sterol reductase; part of the third module of ergosterol biosynthesis pathway that includes the late steps of the pathway. Catalyzes the last step of ergosterol biosynthesis by converting ergosta-5,7,22,24(28)-tetraen-3beta-ol into ergosterol. The third module or late pathway involves the ergosterol synthesis itself through consecutive reactions that mainly occur in the endoplasmic reticulum (ER) membrane. Firstly, the squalene synthase erg9 catalyzes the condensation of 2 farnesyl pyrophosphate moieties to form squalene, which is the precursor of all steroids. Squalene synthase is crucial for balancing the incorporation of farnesyl diphosphate (FPP) into sterol and nonsterol isoprene synthesis. Secondly, squalene is converted into lanosterol by the consecutive action of the squalene epoxidase erg1 and the lanosterol synthase erg7. Then, the delta(24)-sterol C-methyltransferase erg6 methylates lanosterol at C-24 to produce eburicol. Eburicol is the substrate of the sterol 14-alpha demethylase encoded by cyp51A and cyp51B, to yield 4,4,24-trimethyl ergosta-8,14,24(28)-trienol. The C-14 reductase erg24 then reduces the C14=C15 double bond which leads to 4,4-dimethylfecosterol. A sequence of further demethylations at C-4, involving the C-4 demethylation complex containing the C-4 methylsterol oxidases erg25A or erg25B, the sterol-4-alpha-carboxylate 3-dehydrogenase erg26 and the 3-keto-steroid reductase erg27, leads to the production of fecosterol via 4-methylfecosterol. The C-8 sterol isomerase erg2 then catalyzes the reaction which results in unsaturation at C-7 in the B ring of sterols and thus converts fecosterol to episterol. The sterol-C5-desaturase erg3B then catalyzes the introduction of a C-5 double bond in the B ring to produce 5-dehydroepisterol. The 2 other sterol-C5-desaturases, erg3A and erg3C, seem to be less important in ergosterol biosynthesis. The C-22 sterol desaturase erg5 further converts 5-dehydroepisterol into ergosta-5,7,22,24(28)-tetraen-3beta-ol by forming the C-22(23) double bond in the sterol side chain. Finally, ergosta-5,7,22,24(28)-tetraen-3beta-ol is substrate of the C-24(28) sterol reductases erg4A and erg4B to produce ergosterol. Possible alternative sterol biosynthetic pathways might exist from fecosterol to ergosterol, depending on the activities of the erg3 isoforms. The sequence is that of Delta(24(24(1)))-sterol reductase erg4A from Aspergillus fumigatus (strain ATCC MYA-4609 / CBS 101355 / FGSC A1100 / Af293) (Neosartorya fumigata).